We begin with the raw amino-acid sequence, 279 residues long: Thymidylate synthase (279 aa).

Arg37 serves as a coordination point for dUMP. His67 contributes to the (6R)-5,10-methylene-5,6,7,8-tetrahydrofolate binding site. DUMP is bound at residue Arg142–Arg143. The active-site Nucleophile is the Cys162. DUMP-binding positions include Arg182 to Asp185, Asn193, and His223 to Tyr225. A (6R)-5,10-methylene-5,6,7,8-tetrahydrofolate-binding site is contributed by Asp185. (6R)-5,10-methylene-5,6,7,8-tetrahydrofolate is bound at residue Ser278.

The protein belongs to the thymidylate synthase family. Bacterial-type ThyA subfamily. In terms of assembly, homodimer.

It localises to the cytoplasm. It catalyses the reaction dUMP + (6R)-5,10-methylene-5,6,7,8-tetrahydrofolate = 7,8-dihydrofolate + dTMP. It participates in pyrimidine metabolism; dTTP biosynthesis. Functionally, catalyzes the reductive methylation of 2'-deoxyuridine-5'-monophosphate (dUMP) to 2'-deoxythymidine-5'-monophosphate (dTMP) while utilizing 5,10-methylenetetrahydrofolate (mTHF) as the methyl donor and reductant in the reaction, yielding dihydrofolate (DHF) as a by-product. This enzymatic reaction provides an intracellular de novo source of dTMP, an essential precursor for DNA biosynthesis. This Caulobacter vibrioides (strain ATCC 19089 / CIP 103742 / CB 15) (Caulobacter crescentus) protein is Thymidylate synthase.